The following is a 320-amino-acid chain: Ribosomal RNA large subunit methyltransferase F (320 aa).

A disordered region spans residues 1 to 20; it reads MHKSANSKTRKQSKGLHPRN.

The protein belongs to the methyltransferase superfamily. METTL16/RlmF family.

It is found in the cytoplasm. The catalysed reaction is adenosine(1618) in 23S rRNA + S-adenosyl-L-methionine = N(6)-methyladenosine(1618) in 23S rRNA + S-adenosyl-L-homocysteine + H(+). Specifically methylates the adenine in position 1618 of 23S rRNA. The polypeptide is Ribosomal RNA large subunit methyltransferase F (Saccharophagus degradans (strain 2-40 / ATCC 43961 / DSM 17024)).